The chain runs to 420 residues: Glutamate-1-semialdehyde 2,1-aminomutase (420 aa).

Position 259 is an N6-(pyridoxal phosphate)lysine (Lys259).

It belongs to the class-III pyridoxal-phosphate-dependent aminotransferase family. HemL subfamily. As to quaternary structure, homodimer. Pyridoxal 5'-phosphate serves as cofactor.

The protein localises to the cytoplasm. The catalysed reaction is (S)-4-amino-5-oxopentanoate = 5-aminolevulinate. It functions in the pathway porphyrin-containing compound metabolism; protoporphyrin-IX biosynthesis; 5-aminolevulinate from L-glutamyl-tRNA(Glu): step 2/2. This Nautilia profundicola (strain ATCC BAA-1463 / DSM 18972 / AmH) protein is Glutamate-1-semialdehyde 2,1-aminomutase.